A 129-amino-acid polypeptide reads, in one-letter code: Small ribosomal subunit protein uS9 (129 aa).

Positions 107 to 129 are disordered; sequence SRVVERKKPGKKKARRSPQFSKR. Basic residues predominate over residues 114–129; sequence KPGKKKARRSPQFSKR.

This sequence belongs to the universal ribosomal protein uS9 family.

This Sulfurovum sp. (strain NBC37-1) protein is Small ribosomal subunit protein uS9.